Consider the following 299-residue polypeptide: dTDP-4-dehydrorhamnose reductase (299 aa).

NADH contacts are provided by residues 10 to 12 (GQV), D30, 39 to 40 (DF), and 63 to 65 (AHT). 11-12 (QV) is an NADPH binding site. NADPH contacts are provided by residues 39-40 (DF), 63-65 (AHT), and Y102. 104–105 (TD) contacts dTDP-beta-L-rhamnose. Y128 and K132 together coordinate NADH. Residues Y128 and K132 each contribute to the NADPH site. The Proton donor/acceptor role is filled by Y128. A dTDP-beta-L-rhamnose-binding site is contributed by W153.

The protein belongs to the dTDP-4-dehydrorhamnose reductase family. As to quaternary structure, homodimer. Requires Mg(2+) as cofactor.

The catalysed reaction is dTDP-beta-L-rhamnose + NADP(+) = dTDP-4-dehydro-beta-L-rhamnose + NADPH + H(+). It participates in carbohydrate biosynthesis; dTDP-L-rhamnose biosynthesis. It functions in the pathway bacterial outer membrane biogenesis; LPS O-antigen biosynthesis. Involved in the biosynthesis of the dTDP-L-rhamnose which is an important component of lipopolysaccharide (LPS). Catalyzes the reduction of dTDP-6-deoxy-L-lyxo-4-hexulose to yield dTDP-L-rhamnose. RmlD uses NADH and NADPH nearly equally well. The protein is dTDP-4-dehydrorhamnose reductase of Shigella flexneri.